Here is a 349-residue protein sequence, read N- to C-terminus: Protein pelota homolog (349 aa).

It belongs to the eukaryotic release factor 1 family. Pelota subfamily. Monomer. The cofactor is a divalent metal cation.

The protein localises to the cytoplasm. May function in recognizing stalled ribosomes, interact with stem-loop structures in stalled mRNA molecules, and effect endonucleolytic cleavage of the mRNA. May play a role in the release non-functional ribosomes and degradation of damaged mRNAs. Has endoribonuclease activity. The chain is Protein pelota homolog from Nitrosopumilus maritimus (strain SCM1).